The following is a 161-amino-acid chain: Large ribosomal subunit protein uL15 (161 aa).

The segment at 1–42 (MKLSDIADNAGSRKKRMRVGRGIGSGKGKQSGRGGKGQTARS) is disordered. A compositionally biased stretch (gly residues) spans 21–37 (RGIGSGKGKQSGRGGKG).

The protein belongs to the universal ribosomal protein uL15 family. In terms of assembly, part of the 50S ribosomal subunit.

Binds to the 23S rRNA. The protein is Large ribosomal subunit protein uL15 of Bradyrhizobium diazoefficiens (strain JCM 10833 / BCRC 13528 / IAM 13628 / NBRC 14792 / USDA 110).